Consider the following 465-residue polypeptide: Protein CitXG (465 aa).

The tract at residues 1-182 is apo-citrate lyase phosphoribosyl-dephospho-CoA transferase; the sequence is MQHFFTTFST…QSLAQNHDFA (182 aa). The segment at 183–465 is 2-(5''-triphosphoribosyl)-3'-dephosphocoenzyme-A synthase; sequence EHIGEQVYLA…TIFFLSFRGN (283 aa).

It in the N-terminal section; belongs to the CitX family. The protein in the C-terminal section; belongs to the CitG/MdcB family.

The enzyme catalyses apo-[citrate lyase ACP] + 2'-(5''-triphospho-alpha-D-ribosyl)-3'-dephospho-CoA = holo-[citrate lyase ACP] + diphosphate. The catalysed reaction is 3'-dephospho-CoA + ATP = 2'-(5''-triphospho-alpha-D-ribosyl)-3'-dephospho-CoA + adenine. Its function is as follows. Bifunctional enzyme that catalyzes formation of 2-(5''-triphosphoribosyl)-3'-dephosphocoenzyme-A, and then the transfer of this prosthetic group precursor to the apo-acyl carrier protein (gamma chain) of the citrate lyase to yield the holo-acyl carrier protein. The sequence is that of Protein CitXG (citXG) from Haemophilus influenzae (strain ATCC 51907 / DSM 11121 / KW20 / Rd).